Consider the following 89-residue polypeptide: Small ribosomal subunit protein uS15 (89 aa).

A compositionally biased stretch (basic and acidic residues) spans M1–V11. The disordered stretch occupies residues M1–S24.

This sequence belongs to the universal ribosomal protein uS15 family. In terms of assembly, part of the 30S ribosomal subunit. Forms a bridge to the 50S subunit in the 70S ribosome, contacting the 23S rRNA.

Its function is as follows. One of the primary rRNA binding proteins, it binds directly to 16S rRNA where it helps nucleate assembly of the platform of the 30S subunit by binding and bridging several RNA helices of the 16S rRNA. In terms of biological role, forms an intersubunit bridge (bridge B4) with the 23S rRNA of the 50S subunit in the ribosome. The sequence is that of Small ribosomal subunit protein uS15 from Afipia carboxidovorans (strain ATCC 49405 / DSM 1227 / KCTC 32145 / OM5) (Oligotropha carboxidovorans).